The primary structure comprises 431 residues: Adenylosuccinate synthetase (431 aa).

GTP contacts are provided by residues 12-18 (GDEGKGK) and 40-42 (GHT). Aspartate 13 serves as the catalytic Proton acceptor. Residues aspartate 13 and glycine 40 each coordinate Mg(2+). Residues 13-16 (DEGK), 38-41 (NAGH), threonine 128, arginine 142, glutamine 225, threonine 240, and arginine 304 contribute to the IMP site. The active-site Proton donor is histidine 41. 300-306 (TTTGRPR) serves as a coordination point for substrate. GTP is bound by residues arginine 306, 332 to 334 (KLD), and 414 to 416 (GVG).

The protein belongs to the adenylosuccinate synthetase family. In terms of assembly, homodimer. The cofactor is Mg(2+).

Its subcellular location is the cytoplasm. The catalysed reaction is IMP + L-aspartate + GTP = N(6)-(1,2-dicarboxyethyl)-AMP + GDP + phosphate + 2 H(+). The protein operates within purine metabolism; AMP biosynthesis via de novo pathway; AMP from IMP: step 1/2. In terms of biological role, plays an important role in the de novo pathway of purine nucleotide biosynthesis. Catalyzes the first committed step in the biosynthesis of AMP from IMP. The sequence is that of Adenylosuccinate synthetase from Thermomicrobium roseum (strain ATCC 27502 / DSM 5159 / P-2).